The sequence spans 336 residues: Quinolinate synthase (336 aa).

Residues His25 and Ser42 each contribute to the iminosuccinate site. Residue Cys86 coordinates [4Fe-4S] cluster. Iminosuccinate-binding positions include 117-119 (YIN) and Ser138. Residue Cys198 participates in [4Fe-4S] cluster binding. Iminosuccinate contacts are provided by residues 224–226 (HPE) and Thr241. Cys288 lines the [4Fe-4S] cluster pocket.

This sequence belongs to the quinolinate synthase family. Type 3 subfamily. It depends on [4Fe-4S] cluster as a cofactor.

It is found in the cytoplasm. The enzyme catalyses iminosuccinate + dihydroxyacetone phosphate = quinolinate + phosphate + 2 H2O + H(+). It functions in the pathway cofactor biosynthesis; NAD(+) biosynthesis; quinolinate from iminoaspartate: step 1/1. Catalyzes the condensation of iminoaspartate with dihydroxyacetone phosphate to form quinolinate. This is Quinolinate synthase from Helicobacter pylori (strain ATCC 700392 / 26695) (Campylobacter pylori).